A 294-amino-acid polypeptide reads, in one-letter code: Aspartate carbamoyltransferase catalytic subunit (294 aa).

Carbamoyl phosphate is bound by residues Arg49 and Thr50. Position 77 (Lys77) interacts with L-aspartate. Carbamoyl phosphate is bound by residues Arg99, His127, and Gln130. L-aspartate is bound by residues Arg161 and Arg211. Gly250 and Pro251 together coordinate carbamoyl phosphate.

It belongs to the aspartate/ornithine carbamoyltransferase superfamily. ATCase family. As to quaternary structure, heterododecamer (2C3:3R2) of six catalytic PyrB chains organized as two trimers (C3), and six regulatory PyrI chains organized as three dimers (R2).

It carries out the reaction carbamoyl phosphate + L-aspartate = N-carbamoyl-L-aspartate + phosphate + H(+). Its pathway is pyrimidine metabolism; UMP biosynthesis via de novo pathway; (S)-dihydroorotate from bicarbonate: step 2/3. Its function is as follows. Catalyzes the condensation of carbamoyl phosphate and aspartate to form carbamoyl aspartate and inorganic phosphate, the committed step in the de novo pyrimidine nucleotide biosynthesis pathway. This is Aspartate carbamoyltransferase catalytic subunit from Sulfurovum sp. (strain NBC37-1).